The following is a 247-amino-acid chain: Coproheme decarboxylase (247 aa).

Fe-coproporphyrin III contacts are provided by residues arginine 129, 143-147, histidine 170, glutamine 183, and serine 221; that span reads YPMDK. Residue tyrosine 143 is part of the active site.

Belongs to the ChdC family. Type 1 subfamily. Fe-coproporphyrin III serves as cofactor.

It carries out the reaction Fe-coproporphyrin III + 2 H2O2 + 2 H(+) = heme b + 2 CO2 + 4 H2O. The enzyme catalyses Fe-coproporphyrin III + H2O2 + H(+) = harderoheme III + CO2 + 2 H2O. The catalysed reaction is harderoheme III + H2O2 + H(+) = heme b + CO2 + 2 H2O. The protein operates within porphyrin-containing compound metabolism; protoheme biosynthesis. Functionally, involved in coproporphyrin-dependent heme b biosynthesis. Catalyzes the decarboxylation of Fe-coproporphyrin III (coproheme) to heme b (protoheme IX), the last step of the pathway. The reaction occurs in a stepwise manner with a three-propionate intermediate. This chain is Coproheme decarboxylase, found in Bacillus mycoides (strain KBAB4) (Bacillus weihenstephanensis).